Consider the following 105-residue polypeptide: Nucleoid-associated protein Lm4b_02677 (105 aa).

The segment covering 1–16 has biased composition (low complexity); sequence MRGMGNMQGMMKQMQK. Positions 1–23 are disordered; sequence MRGMGNMQGMMKQMQKMQKEMAK.

This sequence belongs to the YbaB/EbfC family. In terms of assembly, homodimer.

The protein localises to the cytoplasm. It localises to the nucleoid. Functionally, binds to DNA and alters its conformation. May be involved in regulation of gene expression, nucleoid organization and DNA protection. This chain is Nucleoid-associated protein Lm4b_02677, found in Listeria monocytogenes serotype 4b (strain CLIP80459).